The primary structure comprises 508 residues: Citrate lyase alpha chain (508 aa).

As to quaternary structure, oligomer with a subunit composition of (alpha,beta,gamma)6.

Its subcellular location is the cytoplasm. The enzyme catalyses citrate = oxaloacetate + acetate. It catalyses the reaction citrate + acetyl-CoA = (3S)-citryl-CoA + acetate. Represents a citrate:acetyl-ACP transferase. The sequence is that of Citrate lyase alpha chain (citF) from Klebsiella pneumoniae.